The following is a 180-amino-acid chain: FMN reductase (NADH) RutF (180 aa).

Belongs to the non-flavoprotein flavin reductase family. RutF subfamily.

It catalyses the reaction FMNH2 + NAD(+) = FMN + NADH + 2 H(+). Catalyzes the reduction of FMN to FMNH2 which is used to reduce pyrimidine by RutA via the Rut pathway. The sequence is that of FMN reductase (NADH) RutF from Bradyrhizobium diazoefficiens (strain JCM 10833 / BCRC 13528 / IAM 13628 / NBRC 14792 / USDA 110).